Here is a 625-residue protein sequence, read N- to C-terminus: Probable inactive receptor kinase At5g16590 (625 aa).

The signal sequence occupies residues 1 to 23 (MKNKTNLGLSVFFFFICLVSVTS). LRR repeat units follow at residues 88–111 (KLET…ANLT), 112–134 (LLRY…LFTL), 136–158 (NIIR…VNSA), 160–182 (RLAT…KIKL), and 183–204 (QQFN…SGMP). The chain crosses the membrane as a helical span at residues 246–266 (AIVGIVIGCFVLLLVLFLIVF). The 271-residue stretch at 343–613 (KASAEVLGKG…PEVTRLIEEV (271 aa)) folds into the Protein kinase domain. Serine 345 is subject to Phosphoserine. ATP contacts are provided by residues 349–357 (LGKGTFGSS) and lysine 371. Serine 422 is modified (phosphoserine). A phosphothreonine mark is found at threonine 442 and threonine 496. Serine 517 bears the Phosphoserine mark. Threonine 593 carries the post-translational modification Phosphothreonine. A phosphoserine mark is found at serine 619 and serine 624.

This sequence belongs to the protein kinase superfamily. Ser/Thr protein kinase family.

The protein localises to the cell membrane. Its function is as follows. Might be involved in early recognition of growth promoting fungi. Appears to be specific for P.indica. The polypeptide is Probable inactive receptor kinase At5g16590 (Arabidopsis thaliana (Mouse-ear cress)).